The primary structure comprises 242 residues: UPF0309 protein BMEA_B0892 (242 aa).

The 185-residue stretch at 30–214 folds into the SIS domain; sequence AADLIAAAAR…ARLVGEGDAP (185 aa).

It belongs to the UPF0309 family.

This is UPF0309 protein BMEA_B0892 from Brucella melitensis biotype 2 (strain ATCC 23457).